The chain runs to 667 residues: Trifunctional UDP-glucose 4,6-dehydratase/UDP-4-keto-6-deoxy-D-glucose 3,5-epimerase/UDP-4-keto-L-rhamnose-reductase RHM2 (667 aa).

15 to 21 (GAAGFIA) provides a ligand contact to NAD(+). T134 contributes to the substrate binding site. D135 serves as the catalytic Proton donor. Residues E136 and Y161 each act as proton acceptor in the active site. 389–395 (GKTGWLG) is a binding site for NADP(+).

It in the N-terminal section; belongs to the NAD(P)-dependent epimerase/dehydratase family. dTDP-glucose dehydratase subfamily. In the C-terminal section; belongs to the dTDP-4-dehydrorhamnose reductase family. It depends on NAD(+) as a cofactor. Requires NADP(+) as cofactor. In terms of tissue distribution, expressed in roots, stems, leaves, seedlings, inflorescence tips, and siliques.

It catalyses the reaction UDP-alpha-D-glucose = UDP-4-dehydro-6-deoxy-alpha-D-glucose + H2O. It functions in the pathway carbohydrate biosynthesis. Trifunctional enzyme involved in UDP-beta-L-rhamnose biosynthesis, a precursor of the primary cell wall components rhamnogalacturonan I (RG-I) and rhamnogalacturonan II (RG-II). Catalyzes the dehydration of UDP-glucose to form UDP-4-dehydro-6-deoxy-D-glucose followed by the epimerization of the C3' and C5' positions of UDP-4-dehydro-6-deoxy-D-glucose to form UDP-4-keto-beta-L-rhamnose and the reduction of UDP-4-keto-beta-L-rhamnose to yield UDP-beta-L-rhamnose. Required for the normal seed coat epidermal development. This chain is Trifunctional UDP-glucose 4,6-dehydratase/UDP-4-keto-6-deoxy-D-glucose 3,5-epimerase/UDP-4-keto-L-rhamnose-reductase RHM2, found in Arabidopsis thaliana (Mouse-ear cress).